We begin with the raw amino-acid sequence, 594 residues long: Proteasome-associated ATPase (594 aa).

Positions 20 to 98 (DDLAAQVTYL…KEEIDRLAQP (79 aa)) form a coiled coil. Residue 282-287 (GCGKTL) participates in ATP binding. A docks into pockets in the proteasome alpha-ring region spans residues 593–594 (YL).

The protein belongs to the AAA ATPase family. As to quaternary structure, homohexamer. Assembles into a hexameric ring structure that caps the 20S proteasome core. Strongly interacts with the prokaryotic ubiquitin-like protein Pup through a hydrophobic interface; the interacting region of ARC lies in its N-terminal coiled-coil domain. There is one Pup binding site per ARC hexamer ring. Upon ATP-binding, the C-terminus of ARC interacts with the alpha-rings of the proteasome core, possibly by binding to the intersubunit pockets.

It functions in the pathway protein degradation; proteasomal Pup-dependent pathway. ATPase which is responsible for recognizing, binding, unfolding and translocation of pupylated proteins into the bacterial 20S proteasome core particle. May be essential for opening the gate of the 20S proteasome via an interaction with its C-terminus, thereby allowing substrate entry and access to the site of proteolysis. Thus, the C-termini of the proteasomal ATPase may function like a 'key in a lock' to induce gate opening and therefore regulate proteolysis. This Catenulispora acidiphila (strain DSM 44928 / JCM 14897 / NBRC 102108 / NRRL B-24433 / ID139908) protein is Proteasome-associated ATPase.